The sequence spans 392 residues: S-adenosylmethionine synthase (392 aa).

H20 is an ATP binding site. D22 is a binding site for Mg(2+). Residue E48 participates in K(+) binding. Residues E61 and Q106 each coordinate L-methionine. A flexible loop region spans residues 106 to 116; that stretch reads QSRDIINAIEK. Residues 171–173, D248, 254–255, A271, and K275 each bind ATP; these read DSK and RK. D248 serves as a coordination point for L-methionine. An L-methionine-binding site is contributed by K279.

Belongs to the AdoMet synthase family. Homotetramer; dimer of dimers. Mg(2+) is required as a cofactor. The cofactor is K(+).

The protein resides in the cytoplasm. The enzyme catalyses L-methionine + ATP + H2O = S-adenosyl-L-methionine + phosphate + diphosphate. It functions in the pathway amino-acid biosynthesis; S-adenosyl-L-methionine biosynthesis; S-adenosyl-L-methionine from L-methionine: step 1/1. Catalyzes the formation of S-adenosylmethionine (AdoMet) from methionine and ATP. The overall synthetic reaction is composed of two sequential steps, AdoMet formation and the subsequent tripolyphosphate hydrolysis which occurs prior to release of AdoMet from the enzyme. The chain is S-adenosylmethionine synthase from Borreliella afzelii (strain PKo) (Borrelia afzelii).